Here is a 353-residue protein sequence, read N- to C-terminus: Uroporphyrinogen decarboxylase (353 aa).

Residues R26–R30, D75, Y161, S216, and H332 each bind substrate.

The protein belongs to the uroporphyrinogen decarboxylase family. Homodimer.

It is found in the cytoplasm. It carries out the reaction uroporphyrinogen III + 4 H(+) = coproporphyrinogen III + 4 CO2. Its pathway is porphyrin-containing compound metabolism; protoporphyrin-IX biosynthesis; coproporphyrinogen-III from 5-aminolevulinate: step 4/4. Its function is as follows. Catalyzes the decarboxylation of four acetate groups of uroporphyrinogen-III to yield coproporphyrinogen-III. The sequence is that of Uroporphyrinogen decarboxylase from Gluconacetobacter diazotrophicus (strain ATCC 49037 / DSM 5601 / CCUG 37298 / CIP 103539 / LMG 7603 / PAl5).